Here is a 251-residue protein sequence, read N- to C-terminus: Probable transcriptional regulatory protein RSal33209_2002 (251 aa).

The protein belongs to the TACO1 family.

The protein resides in the cytoplasm. This Renibacterium salmoninarum (strain ATCC 33209 / DSM 20767 / JCM 11484 / NBRC 15589 / NCIMB 2235) protein is Probable transcriptional regulatory protein RSal33209_2002.